We begin with the raw amino-acid sequence, 89 residues long: Small ribosomal subunit protein bS20 (89 aa).

The disordered stretch occupies residues methionine 1–lysine 27. A compositionally biased stretch (basic and acidic residues) spans alanine 7 to arginine 18.

It belongs to the bacterial ribosomal protein bS20 family.

Binds directly to 16S ribosomal RNA. This Buchnera aphidicola subsp. Schizaphis graminum (strain Sg) protein is Small ribosomal subunit protein bS20.